The chain runs to 311 residues: Thioredoxin reductase (311 aa).

35–42 (ERGIPGGQ) contacts FAD. A disulfide bond links Cys-134 and Cys-137. 277–286 (DVRDKGLRQI) lines the FAD pocket.

Belongs to the class-II pyridine nucleotide-disulfide oxidoreductase family. Homodimer. FAD serves as cofactor.

It is found in the cytoplasm. It catalyses the reaction [thioredoxin]-dithiol + NADP(+) = [thioredoxin]-disulfide + NADPH + H(+). The chain is Thioredoxin reductase (trxB) from Staphylococcus aureus (strain MRSA252).